A 494-amino-acid chain; its full sequence is DEAD-box ATP-dependent RNA helicase CshA (494 aa).

Positions 3-31 (ITFQDFNLSSDLMKAINRMGFEEATPIQA) match the Q motif motif. Residues 34–204 (IPLGLSNKDV…ERFMTEPEHV (171 aa)) form the Helicase ATP-binding domain. 47 to 54 (AQTGTGKT) lines the ATP pocket. The DEAD box motif lies at 152 to 155 (DEAD). In terms of domain architecture, Helicase C-terminal spans 215 to 375 (NIQQFYLEVQ…RMKEPTLDEA (161 aa)). The interval 413 to 494 (VTVVAAAIKM…SGDRRQKKSY (82 aa)) is required for dimerization or oligomerization. The interval 429-494 (DTPVRLTDEA…SGDRRQKKSY (66 aa)) is disordered. Over residues 443 to 452 (KRYKNQRSSK) the composition is skewed to basic residues. Basic and acidic residues predominate over residues 473-488 (SYDKKRSNDRRSSGDR).

Belongs to the DEAD box helicase family. CshA subfamily. In terms of assembly, homodimer or oligomer. May interact with RNA helicases CshB and DbpA (DeaD). Probably a component of the RNA degradosome complex composed of rny, rnjA, rnjB, pnp, pfkA and eno, and possibly also rnpA (although rnjA and rnjB's presence is unclear). Interacts with ribosomal proteins L1 and L3 (rplA and rplC) and the protein component of RNase RnpA. Interacts with the RNA polymerase core. Mg(2+) serves as cofactor.

Its subcellular location is the cytoplasm. It localises to the nucleoid. It is found in the cell membrane. The catalysed reaction is ATP + H2O = ADP + phosphate + H(+). RNA helicase activity is inhibited by EDTA. Its function is as follows. The most abundant DEAD-box RNA helicase. An ATP-dependent RNA helicase with RNA-dependent ATPase activity. May work in conjunction with the cold shock proteins to ensure proper initiation of transcription at low and optimal temperatures. In vitro, unwinds dsRNA in both 5'- and 3'- directions. Plays a role in ribosomal 50S subunit assembly. Its deletion leads to changes in mRNA levels for over 200 transcripts. This chain is DEAD-box ATP-dependent RNA helicase CshA, found in Bacillus subtilis (strain 168).